A 230-amino-acid chain; its full sequence is Dephospho-CoA kinase (230 aa).

Residues 3–225 (IIGLTGGIAT…REGGAICPTP (223 aa)) form the DPCK domain. 11–16 (ATGKST) contacts ATP.

The protein belongs to the CoaE family.

The protein resides in the cytoplasm. It catalyses the reaction 3'-dephospho-CoA + ATP = ADP + CoA + H(+). It functions in the pathway cofactor biosynthesis; coenzyme A biosynthesis; CoA from (R)-pantothenate: step 5/5. Its function is as follows. Catalyzes the phosphorylation of the 3'-hydroxyl group of dephosphocoenzyme A to form coenzyme A. The polypeptide is Dephospho-CoA kinase (Synechococcus sp. (strain JA-3-3Ab) (Cyanobacteria bacterium Yellowstone A-Prime)).